The sequence spans 249 residues: Vesicle-associated membrane protein-associated protein A (249 aa).

The residue at position 2 (alanine 2) is an N-acetylalanine. Over alanine 2–proline 227 the chain is Cytoplasmic. An MSP domain is found at isoleucine 14 to glutamate 131. The segment at lysine 50–threonine 53 is phosphorylated FFAT motif binding. Lysine 125 is subject to N6-acetyllysine. Over residues glutamate 135–proline 144 the composition is skewed to basic and acidic residues. Residues glutamate 135 to leucine 167 form a disordered region. Serine 166 carries the phosphoserine modification. Positions aspartate 169–lysine 205 form a coiled coil. Threonine 170 carries the post-translational modification Phosphothreonine. 3 positions are modified to phosphoserine: serine 214, serine 216, and serine 219. Residues leucine 228 to isoleucine 248 traverse the membrane as a helical; Anchor for type IV membrane protein segment.

It belongs to the VAMP-associated protein (VAP) (TC 9.B.17) family. As to quaternary structure, homodimer; disulfide-linked. Heterodimer with VAPB. Interacts with VAMP1, VAMP2, STX1A, BET1, SEC22C and with the C-terminal domain of OCLN. Interacts (via MSP domain) with OSBPL1A (via FFAT motif). Interacts (via MSP domain) with ZFYVE27; may retain ZFYVE27 in the endoplasmic reticulum and regulate its function in cell projections formation. Interacts with OSBP. Interacts (via C-terminus) with RSAD2/viperin (via C-terminus). Interacts with IFITM3. Interacts with OSBPL3 (phosphorylated form). Interacts with KIF5A in a ZFYVE27-dependent manner. Interacts (via MSP domain) with STARD3 (via phosphorylated FFAT motif); this interaction recruits VAPA to the endosome. Interacts with STARD3NL (via FFAT motif). Interacts with CERT1. Interacts with PLEKHA3 and SACM1L to form a ternary complex. Interacts with VPS13A (via FFAT motif). Interacts with RB1CC1 (via phosphorylated FFAT motif), MIGA2 (via phosphorylated FFAT motif), RMDN3 (via phosphorylated FFAT motif), KCNB1 (via phosphorylated FFAT motif) and KCNB2 (via phosphorylated FFAT motif). Interacts (via MSP domain) with WDR44 (via FFAT-like motif); the interactions connect the endoplasmic reticulum (ER) with the endosomal tubule. (Microbial infection) Interacts with HCV protein NS5A and NS5B. In terms of tissue distribution, ubiquitous.

The protein localises to the endoplasmic reticulum membrane. The protein resides in the cell membrane. Its subcellular location is the cell junction. It is found in the tight junction. It localises to the nucleus membrane. Functionally, endoplasmic reticulum (ER)-anchored protein that mediates the formation of contact sites between the ER and endosomes via interaction with FFAT motif-containing proteins such as STARD3 or WDR44. STARD3-VAPA interaction enables cholesterol transfer from the ER to endosomes. Via interaction with WDR44 participates in neosynthesized protein export. In addition, recruited to the plasma membrane through OSBPL3 binding. The OSBPL3-VAPA complex stimulates RRAS signaling which in turn attenuates integrin beta-1 (ITGB1) activation at the cell surface. With OSBPL3, may regulate ER morphology. May play a role in vesicle trafficking. In Homo sapiens (Human), this protein is Vesicle-associated membrane protein-associated protein A.